The chain runs to 368 residues: Phosphoribosylaminoimidazole-succinocarboxamide synthase (368 aa).

Belongs to the SAICAR synthetase family.

The enzyme catalyses 5-amino-1-(5-phospho-D-ribosyl)imidazole-4-carboxylate + L-aspartate + ATP = (2S)-2-[5-amino-1-(5-phospho-beta-D-ribosyl)imidazole-4-carboxamido]succinate + ADP + phosphate + 2 H(+). It functions in the pathway purine metabolism; IMP biosynthesis via de novo pathway; 5-amino-1-(5-phospho-D-ribosyl)imidazole-4-carboxamide from 5-amino-1-(5-phospho-D-ribosyl)imidazole-4-carboxylate: step 1/2. This chain is Phosphoribosylaminoimidazole-succinocarboxamide synthase, found in Vibrio cholerae serotype O1 (strain ATCC 39315 / El Tor Inaba N16961).